The primary structure comprises 1171 residues: ATP-dependent helicase/deoxyribonuclease subunit B (1171 aa).

Residues 1–343 (MSLRFVIGRA…LVAEENYRYR (343 aa)) form the UvrD-like helicase ATP-binding domain. Position 8–15 (8–15 (GRAGSGKS)) interacts with ATP. The 307-residue stretch at 281 to 587 (MEQPRFHSPA…QFANIPPSLD (307 aa)) folds into the UvrD-like helicase C-terminal domain. [4Fe-4S] cluster is bound by residues Cys-805, Cys-1129, Cys-1132, and Cys-1138.

It belongs to the helicase family. AddB/RexB type 1 subfamily. In terms of assembly, heterodimer of AddA and AddB. It depends on Mg(2+) as a cofactor. [4Fe-4S] cluster is required as a cofactor.

Functionally, the heterodimer acts as both an ATP-dependent DNA helicase and an ATP-dependent, dual-direction single-stranded exonuclease. Recognizes the chi site generating a DNA molecule suitable for the initiation of homologous recombination. The AddB subunit has 5' -&gt; 3' nuclease activity but not helicase activity. This chain is ATP-dependent helicase/deoxyribonuclease subunit B, found in Bacillus thuringiensis subsp. konkukian (strain 97-27).